Consider the following 345-residue polypeptide: Mariner Mos1 transposase (345 aa).

The interval 1–112 (MSSFVPNKEQ…VSNRLREMGK (112 aa)) is DNA-binding. DNA-binding regions (H-T-H motif) lie at residues 24-55 (TAAE…RFKS) and 89-110 (QKQL…LREM). The segment at 113-125 (IQKVGRWVPHELN) is linker. Residues 126 to 345 (ERQMERRKNT…CVASDGKYLE (220 aa)) form a catalytic region. D156, D249, and D284 together coordinate Mg(2+).

In terms of assembly, homodimer. The complex has a trans arrangement, with each transposon end recognized by the DNA binding region of one transposase monomer and by the active site of the other monomer. It depends on Mg(2+) as a cofactor. Mn(2+) serves as cofactor.

Its subcellular location is the nucleus. Its function is as follows. Mediates transposition of transposon Mos1 by a 'cut and paste' mechanism. Transposases are sequence-specific nucleases and strand transferases that catalyze transposition through an ordered series of events: sequence-specific binding of transposase to the terminal inverted repeats (IR) present at each end of the transposon, pairing of the transposon IRs in a paired-end complex (PEC), cleavage of one or both DNA strands at each transposon end, capture of target DNA, and strand transfer to insert the transposon at a new site. The polypeptide is Mariner Mos1 transposase (mariner\T) (Drosophila mauritiana (Fruit fly)).